The chain runs to 609 residues: Proteasome-associated ATPase (609 aa).

Residues 1 to 27 (MGSSERSEAFGTPRESDMSSGDEAELE) are disordered. A coiled-coil region spans residues 17 to 96 (DMSSGDEAEL…LREEVDRLGQ (80 aa)). 296-301 (GCGKTL) serves as a coordination point for ATP. Residues 608–609 (YL) form a docks into pockets in the proteasome alpha-ring region.

This sequence belongs to the AAA ATPase family. In terms of assembly, homohexamer. Assembles into a hexameric ring structure that caps the 20S proteasome core. Strongly interacts with the prokaryotic ubiquitin-like protein Pup through a hydrophobic interface; the interacting region of ARC lies in its N-terminal coiled-coil domain. There is one Pup binding site per ARC hexamer ring. Upon ATP-binding, the C-terminus of ARC interacts with the alpha-rings of the proteasome core, possibly by binding to the intersubunit pockets.

The protein operates within protein degradation; proteasomal Pup-dependent pathway. Functionally, ATPase which is responsible for recognizing, binding, unfolding and translocation of pupylated proteins into the bacterial 20S proteasome core particle. May be essential for opening the gate of the 20S proteasome via an interaction with its C-terminus, thereby allowing substrate entry and access to the site of proteolysis. Thus, the C-termini of the proteasomal ATPase may function like a 'key in a lock' to induce gate opening and therefore regulate proteolysis. The chain is Proteasome-associated ATPase from Mycobacterium avium (strain 104).